We begin with the raw amino-acid sequence, 317 residues long: o-succinylbenzoate synthase (317 aa).

2-succinylbenzoate is bound by residues 71 to 73 (NAT) and Lys95. Catalysis depends on Lys97, which acts as the Proton donor. Mg(2+)-binding residues include Asp128, Glu154, and Asp177. 128–130 (DVN) lines the 2-succinylbenzoate pocket. Lys201 lines the 2-succinylbenzoate pocket. Residue Lys201 is the Proton acceptor of the active site.

The protein belongs to the mandelate racemase/muconate lactonizing enzyme family. MenC type 1 subfamily. Monomer. It depends on a divalent metal cation as a cofactor.

It catalyses the reaction (1R,6R)-6-hydroxy-2-succinyl-cyclohexa-2,4-diene-1-carboxylate = 2-succinylbenzoate + H2O. Its pathway is quinol/quinone metabolism; 1,4-dihydroxy-2-naphthoate biosynthesis; 1,4-dihydroxy-2-naphthoate from chorismate: step 4/7. It functions in the pathway quinol/quinone metabolism; menaquinone biosynthesis. Functionally, converts 2-succinyl-6-hydroxy-2,4-cyclohexadiene-1-carboxylate (SHCHC) to 2-succinylbenzoate (OSB). Does not show N-succinylamino acid racemase (NSAR) activity with N-succinyl-L-phenylglycine as substrate. The sequence is that of o-succinylbenzoate synthase from Thermobifida fusca (strain YX).